Here is a 558-residue protein sequence, read N- to C-terminus: MERGAGLWLGLLAVFFVLTYLVPLEGRLLWQPDETRYAEISREMLASGDWMVPHLLGLRYFEKPLAGYWMNNIGQWLFGSTNFAVRFASVFSTGLSALLVFTVSWTVGRQLRQSLLAALIFLSLLLVFGVGTYSVLDPMIALWLNAAMAAHVFALRADRRTTRGVAWLLLGLACGLGFMTKGFLALVVPAIAVLPVALYYRQLKATLGYGALAALLAVLVNLPWALALSRLEPDFWHYFFWVEHIQRFAAENAQHRAPFWFYLPVLALGSLPWLGLLPGAMAAGWRARRVQPERFLLLCWVVMPLLFFSVAKGKLLTYILPCMAPLALLLAAYGRECADKLRSKVFDANAGINTAFALCAIVALLLAGSGLLPWARIYSVGEWPRIVIGTLVFAGWLCFAAVSRRSQGDRWALAAFCPLLLSLLVGQIIPQRIIDGNQPQEFIRRYETTLNQSRYVLSNHVGVATALAWELERNDVLMYDDKGELAYGLEYADVQGRHLSRDDFPHWLAKERLKGDVALLLLLDRRQDLPPGLPKADKVHRNHRIALLHYQQLPCCEQ.

A run of 12 helical transmembrane segments spans residues 4–24 (GAGL…LVPL), 87–107 (FASV…SWTV), 115–135 (LLAA…TYSV), 136–156 (LDPM…FALR), 178–198 (FMTK…PVAL), 207–227 (LGYG…WALA), 257–277 (APFW…LGLL), 295–315 (FLLL…KGKL), 316–336 (LTYI…YGRE), 355–375 (AFAL…LPWA), 383–403 (WPRI…AAVS), and 411–431 (WALA…IIPQ).

Belongs to the glycosyltransferase 83 family.

Its subcellular location is the cell inner membrane. The catalysed reaction is 4-amino-4-deoxy-alpha-L-arabinopyranosyl di-trans,octa-cis-undecaprenyl phosphate + lipid IVA = lipid IIA + di-trans,octa-cis-undecaprenyl phosphate.. It functions in the pathway lipopolysaccharide metabolism; 4-amino-4-deoxy-beta-L-arabinose-lipid A biosynthesis. Functionally, catalyzes the transfer of the L-Ara4N moiety of the glycolipid undecaprenyl phosphate-alpha-L-Ara4N to lipid A. The modified arabinose is attached to lipid A and is required for resistance to polymyxin and cationic antimicrobial peptides. The sequence is that of Undecaprenyl phosphate-alpha-4-amino-4-deoxy-L-arabinose arabinosyl transferase 1 from Sodalis glossinidius (strain morsitans).